Reading from the N-terminus, the 383-residue chain is Outer membrane protein S2 (383 aa).

The N-terminal stretch at 1-21 is a signal peptide; it reads MKRKVLALVIPALLAAGAAHA.

The protein belongs to the Gram-negative porin family. As to quaternary structure, homotrimer.

It is found in the cell outer membrane. In terms of biological role, forms pores that allow passive diffusion of small molecules across the outer membrane. This chain is Outer membrane protein S2 (ompS2), found in Salmonella typhi.